Here is a 294-residue protein sequence, read N- to C-terminus: 3-methyl-2-oxobutanoate hydroxymethyltransferase 1 (294 aa).

Aspartate 55 contacts Mg(2+). 3-methyl-2-oxobutanoate contacts are provided by residues aspartate 55 to serine 56 and lysine 123. Residue glutamate 192 is the Proton acceptor of the active site.

It belongs to the PanB family. Homodecamer; pentamer of dimers. Mg(2+) is required as a cofactor.

It localises to the cytoplasm. It carries out the reaction 3-methyl-2-oxobutanoate + (6R)-5,10-methylene-5,6,7,8-tetrahydrofolate + H2O = 2-dehydropantoate + (6S)-5,6,7,8-tetrahydrofolate. It functions in the pathway cofactor biosynthesis; (R)-pantothenate biosynthesis; (R)-pantoate from 3-methyl-2-oxobutanoate: step 1/2. Functionally, catalyzes the reversible reaction in which hydroxymethyl group from 5,10-methylenetetrahydrofolate is transferred onto alpha-ketoisovalerate to form ketopantoate. The polypeptide is 3-methyl-2-oxobutanoate hydroxymethyltransferase 1 (Methylibium petroleiphilum (strain ATCC BAA-1232 / LMG 22953 / PM1)).